A 63-amino-acid chain; its full sequence is Prokaryotic ubiquitin-like protein Pup (63 aa).

Residues M1–G11 are compositionally biased toward basic and acidic residues. Residues M1–D36 form a disordered region. Positions S20–Y57 are ARC ATPase binding. Positions V23 to E51 form a coiled coil. Q63 carries the post-translational modification Deamidated glutamine. An Isoglutamyl lysine isopeptide (Gln-Lys) (interchain with K-? in acceptor proteins) cross-link involves residue Q63.

It belongs to the prokaryotic ubiquitin-like protein family. As to quaternary structure, strongly interacts with the proteasome-associated ATPase ARC through a hydrophobic interface; the interacting region of Pup lies in its C-terminal half. There is one Pup binding site per ARC hexamer ring. In terms of processing, is modified by deamidation of its C-terminal glutamine to glutamate by the deamidase Dop, a prerequisite to the subsequent pupylation process.

It functions in the pathway protein degradation; proteasomal Pup-dependent pathway. Functionally, protein modifier that is covalently attached to lysine residues of substrate proteins, thereby targeting them for proteasomal degradation. The tagging system is termed pupylation. This chain is Prokaryotic ubiquitin-like protein Pup, found in Mycobacterium leprae (strain Br4923).